The sequence spans 899 residues: Protein translocase subunit SecA (899 aa).

Residues Gln87, 105–109 (GEGKT), and Asp516 each bind ATP. Zn(2+)-binding residues include Cys884, Cys886, Cys895, and His896.

Belongs to the SecA family. In terms of assembly, monomer and homodimer. Part of the essential Sec protein translocation apparatus which comprises SecA, SecYEG and auxiliary proteins SecDF. Other proteins may also be involved. The cofactor is Zn(2+).

Its subcellular location is the cell inner membrane. It is found in the cytoplasm. The catalysed reaction is ATP + H2O + cellular proteinSide 1 = ADP + phosphate + cellular proteinSide 2.. Functionally, part of the Sec protein translocase complex. Interacts with the SecYEG preprotein conducting channel. Has a central role in coupling the hydrolysis of ATP to the transfer of proteins into and across the cell membrane, serving as an ATP-driven molecular motor driving the stepwise translocation of polypeptide chains across the membrane. This is Protein translocase subunit SecA from Borreliella burgdorferi (strain ZS7) (Borrelia burgdorferi).